Here is a 215-residue protein sequence, read N- to C-terminus: UPF0502 protein PputGB1_3531 (215 aa).

The protein belongs to the UPF0502 family.

This is UPF0502 protein PputGB1_3531 from Pseudomonas putida (strain GB-1).